Reading from the N-terminus, the 377-residue chain is Glutamate 5-kinase (377 aa).

An ATP-binding site is contributed by Lys-22. Positions 62, 149, and 161 each coordinate substrate. ATP contacts are provided by residues 181–182 (TD) and 223–229 (TGGMVTK). Positions 285 to 363 (RGTIVVDAGA…AQLKRFLGPQ (79 aa)) constitute a PUA domain.

This sequence belongs to the glutamate 5-kinase family.

It localises to the cytoplasm. The catalysed reaction is L-glutamate + ATP = L-glutamyl 5-phosphate + ADP. Its pathway is amino-acid biosynthesis; L-proline biosynthesis; L-glutamate 5-semialdehyde from L-glutamate: step 1/2. Its function is as follows. Catalyzes the transfer of a phosphate group to glutamate to form L-glutamate 5-phosphate. In Bifidobacterium longum (strain DJO10A), this protein is Glutamate 5-kinase.